The following is a 256-amino-acid chain: Anti-Pycsar protein Apyc1 (256 aa).

Residues 21–230 (YNNSALVTFT…EDQDRVFLMH (210 aa)) form a beta-lactamase-like region. Residues His64, His66, Asp68, and His69 each coordinate Zn(2+). Residues Glu74 and Tyr112 contribute to the active site. Zn(2+) contacts are provided by His155, Asp179, and His230.

It belongs to the anti-Pycsar protein Apyc1 family. In terms of assembly, homodimer. Requires Zn(2+) as cofactor.

The catalysed reaction is 3',5'-cyclic CMP + H2O = CMP + H(+). It carries out the reaction 3',5'-cyclic UMP + H2O = UMP + H(+). Functionally, counteracts the host Pycsar antiviral defense system. Phosphodiesterase that enables metal-dependent hydrolysis of host cyclic nucleotide Pycsar defense signals such as cCMP and cUMP. The sequence is that of Anti-Pycsar protein Apyc1 from Bacillus phage BSP38.